A 652-amino-acid polypeptide reads, in one-letter code: p-hydroxybenzoic acid efflux pump subunit AaeB (652 aa).

The next 11 helical transmembrane spans lie at 8–28 (FPIKLTFAIVLSLLIGFHFNL), 34–54 (AVMTACIVAGGTAFAAGGDPF), 64–84 (LRIIGTFLGCIAALTIMIATI), 88–108 (ALMMLLCCMWAGLCVWLSSLI), 118–138 (LAGYTALIIVVSVDANGSVLL), 149–169 (EIIIGIVCAILADMLFSPRSV), 367–387 (LFWLWTGWASGSGAMVMLAVI), 404–424 (FLYGMIVAIPLGSLYYMVIMP), 429–449 (SMLLLCISLGVMAFIGGILIQ), 453–473 (IGTLGGLVGTINIITLDNPMT), and 480–500 (LDNALGQAIGCFLALLVILLI).

It belongs to the aromatic acid exporter ArAE (TC 2.A.85) family.

The protein resides in the cell inner membrane. Forms an efflux pump with AaeA. Could function as a metabolic relief valve, allowing to eliminate certain compounds when they accumulate to high levels in the cell. This Erwinia billingiae (strain Eb661) protein is p-hydroxybenzoic acid efflux pump subunit AaeB.